The primary structure comprises 1015 residues: Cytosolic carboxypeptidase 1 (1015 aa).

Residues 384–462 form a disordered region; sequence LPTATPSTPG…GALPKTTRLN (79 aa). A compositionally biased stretch (acidic residues) spans 416–451; sequence EDGMDEEDEAFVRDDDDEGKDDRGSDDDDGKDDDEI. The Peptidase M14 domain occupies 727-1013; the sequence is YPYTYSFLNS…DLLHSFLEMT (287 aa). H792, E795, and H891 together coordinate Zn(2+). The active-site Proton donor/acceptor is E977.

It belongs to the peptidase M14 family. Zn(2+) is required as a cofactor. In hermaphrodites and males, expressed in amphid and IL2 ciliated sensory neurons. In males, expressed in CEM head neurons, RnB and HOB tail neurons, and in gubernacular erector and retractor muscles.

The protein resides in the perikaryon. It is found in the cell projection. Its subcellular location is the cilium. It localises to the dendrite. Catalyzes the deglutamylation of polyglutamate side chains generated by post-translational polyglutamylation of proteins such as tubulins. Via the deglutamylation of tubulin, regulates the localization and velocity of kinesin motors and the structural integrity of microtubules in sensory cilia. In male CEM sensory neurons, regulates the cilia release of bioactive extracellular vesicles. Also regulates microtubule dynamics in uterine muscle cells. The chain is Cytosolic carboxypeptidase 1 from Caenorhabditis elegans.